Consider the following 185-residue polypeptide: Ribosome-recycling factor (185 aa).

The protein belongs to the RRF family.

It localises to the cytoplasm. Responsible for the release of ribosomes from messenger RNA at the termination of protein biosynthesis. May increase the efficiency of translation by recycling ribosomes from one round of translation to another. This Halorhodospira halophila (strain DSM 244 / SL1) (Ectothiorhodospira halophila (strain DSM 244 / SL1)) protein is Ribosome-recycling factor.